A 337-amino-acid chain; its full sequence is Alcohol dehydrogenase (337 aa).

Cysteine 38, histidine 61, cysteine 92, cysteine 95, cysteine 98, cysteine 106, and cysteine 148 together coordinate Zn(2+). NAD(+) is bound by residues 172–177 (GIGGLG), aspartate 195, lysine 200, 260–262 (VGL), and arginine 331.

The protein belongs to the zinc-containing alcohol dehydrogenase family. Zn(2+) serves as cofactor.

The catalysed reaction is a primary alcohol + NAD(+) = an aldehyde + NADH + H(+). It catalyses the reaction a secondary alcohol + NAD(+) = a ketone + NADH + H(+). Its activity is regulated as follows. Substrate inhibition is not observed with any alcohols, and the enzyme-NADH dissociation is not considered to be a rate-limiting step. Functionally, NAD(+)-dependent alcohol dehydrogenase. This Geobacillus stearothermophilus (Bacillus stearothermophilus) protein is Alcohol dehydrogenase (adhT).